We begin with the raw amino-acid sequence, 369 residues long: 2-aminoethylphosphonate--pyruvate transaminase (369 aa).

K193 carries the N6-(pyridoxal phosphate)lysine modification.

It belongs to the class-V pyridoxal-phosphate-dependent aminotransferase family. PhnW subfamily. As to quaternary structure, homodimer. Pyridoxal 5'-phosphate is required as a cofactor.

It carries out the reaction (2-aminoethyl)phosphonate + pyruvate = phosphonoacetaldehyde + L-alanine. Its function is as follows. Involved in phosphonate degradation. The polypeptide is 2-aminoethylphosphonate--pyruvate transaminase (Pseudomonas fluorescens (strain Pf0-1)).